Consider the following 126-residue polypeptide: uncharacterized protein (126 aa).

Residues 1–28 (MAGEAVSEHTPDSQEVTVTSVVCCLDSV) are Cytoplasmic-facing. The chain crosses the membrane as a helical span at residues 29 to 49 (VEIGHHVVYSVVTPLIVAVLI). Topologically, residues 50-75 (DTMAGEAVLEHTSDSQEEIVTTVVCS) are extracellular. The chain crosses the membrane as a helical span at residues 76 to 96 (VVPLVCFVVSVVCFVISVVEI). Gly97 is a topological domain (cytoplasmic). The helical transmembrane segment at 98 to 118 (HHVVYSVVAPLTVTVAVETIA) threads the bilayer. Residues 119–126 (EEMDSVHT) are Extracellular-facing.

The protein localises to the membrane. This is an uncharacterized protein from Saccharomyces cerevisiae (strain ATCC 204508 / S288c) (Baker's yeast).